The primary structure comprises 73 residues: UPF0150 protein ssl0259 (73 aa).

This sequence belongs to the UPF0150 family.

The polypeptide is UPF0150 protein ssl0259 (Synechocystis sp. (strain ATCC 27184 / PCC 6803 / Kazusa)).